The following is a 252-amino-acid chain: Imidazole glycerol phosphate synthase subunit HisF (252 aa).

Active-site residues include Asp11 and Asp130.

It belongs to the HisA/HisF family. Heterodimer of HisH and HisF.

It is found in the cytoplasm. It catalyses the reaction 5-[(5-phospho-1-deoxy-D-ribulos-1-ylimino)methylamino]-1-(5-phospho-beta-D-ribosyl)imidazole-4-carboxamide + L-glutamine = D-erythro-1-(imidazol-4-yl)glycerol 3-phosphate + 5-amino-1-(5-phospho-beta-D-ribosyl)imidazole-4-carboxamide + L-glutamate + H(+). Its pathway is amino-acid biosynthesis; L-histidine biosynthesis; L-histidine from 5-phospho-alpha-D-ribose 1-diphosphate: step 5/9. IGPS catalyzes the conversion of PRFAR and glutamine to IGP, AICAR and glutamate. The HisF subunit catalyzes the cyclization activity that produces IGP and AICAR from PRFAR using the ammonia provided by the HisH subunit. The protein is Imidazole glycerol phosphate synthase subunit HisF of Sulfurihydrogenibium sp. (strain YO3AOP1).